Reading from the N-terminus, the 89-residue chain is Cornifin-A (89 aa).

Residues 1–29 (MNSQQQKQPCTPPPQPQQQQVKQPCQPPP) are disordered. 8 tandem repeats follow at residues 3–14 (SQQQKQPCTPPP), 18–29 (QQQVKQPCQPPP), 31–38 (EPCIPKTK), 39–46 (EPCHPKVP), 47–54 (EPCHPKVP), 55–62 (EPCQPKVP), 63–70 (EPCQPKVP), and 71–78 (EPCPSTVT). Positions 3–29 (SQQQKQPCTPPPQPQQQQVKQPCQPPP) are 2 X 12 AA approximate repeats. The 6 X 8 AA approximate tandem repeats stretch occupies residues 31–78 (EPCIPKTKEPCHPKVPEPCHPKVPEPCQPKVPEPCQPKVPEPCPSTVT). The tract at residues 68-89 (KVPEPCPSTVTPAPAQQKTKQK) is disordered. Residues 75 to 89 (STVTPAPAQQKTKQK) are compositionally biased toward polar residues.

Belongs to the cornifin (SPRR) family.

Its subcellular location is the cytoplasm. Its function is as follows. Cross-linked envelope protein of keratinocytes. It is a keratinocyte protein that first appears in the cell cytosol, but ultimately becomes cross-linked to membrane proteins by transglutaminase. All that results in the formation of an insoluble envelope beneath the plasma membrane. This is Cornifin-A (SPRR1A) from Homo sapiens (Human).